Consider the following 782-residue polypeptide: Endonuclease MutS2 (782 aa).

ATP is bound at residue 336–343; sequence GPNTGGKT. A Smr domain is found at 707–782; the sequence is LDLRGYRYED…GFGVTVATLK (76 aa).

Belongs to the DNA mismatch repair MutS family. MutS2 subfamily. As to quaternary structure, homodimer. Binds to stalled ribosomes, contacting rRNA.

Its function is as follows. Endonuclease that is involved in the suppression of homologous recombination and thus may have a key role in the control of bacterial genetic diversity. In terms of biological role, acts as a ribosome collision sensor, splitting the ribosome into its 2 subunits. Detects stalled/collided 70S ribosomes which it binds and splits by an ATP-hydrolysis driven conformational change. Acts upstream of the ribosome quality control system (RQC), a ribosome-associated complex that mediates the extraction of incompletely synthesized nascent chains from stalled ribosomes and their subsequent degradation. Probably generates substrates for RQC. The chain is Endonuclease MutS2 from Staphylococcus aureus (strain bovine RF122 / ET3-1).